The chain runs to 492 residues: Ketol-acid reductoisomerase (NADP(+)) (492 aa).

In terms of domain architecture, KARI N-terminal Rossmann spans Leu-17–Ser-208. Residues Cys-45 to Gln-48, Arg-68, Arg-76, Ser-78, and Asp-108 to Gln-110 contribute to the NADP(+) site. His-132 is an active-site residue. NADP(+) is bound at residue Gly-158. 2 consecutive KARI C-terminal knotted domains span residues Ser-209–Glu-353 and Tyr-354–Met-487. Mg(2+) contacts are provided by Asp-217, Glu-221, Glu-389, and Glu-393. Position 414 (Ser-414) interacts with substrate.

The protein belongs to the ketol-acid reductoisomerase family. Mg(2+) serves as cofactor.

The enzyme catalyses (2R)-2,3-dihydroxy-3-methylbutanoate + NADP(+) = (2S)-2-acetolactate + NADPH + H(+). It carries out the reaction (2R,3R)-2,3-dihydroxy-3-methylpentanoate + NADP(+) = (S)-2-ethyl-2-hydroxy-3-oxobutanoate + NADPH + H(+). It participates in amino-acid biosynthesis; L-isoleucine biosynthesis; L-isoleucine from 2-oxobutanoate: step 2/4. The protein operates within amino-acid biosynthesis; L-valine biosynthesis; L-valine from pyruvate: step 2/4. Functionally, involved in the biosynthesis of branched-chain amino acids (BCAA). Catalyzes an alkyl-migration followed by a ketol-acid reduction of (S)-2-acetolactate (S2AL) to yield (R)-2,3-dihydroxy-isovalerate. In the isomerase reaction, S2AL is rearranged via a Mg-dependent methyl migration to produce 3-hydroxy-3-methyl-2-ketobutyrate (HMKB). In the reductase reaction, this 2-ketoacid undergoes a metal-dependent reduction by NADPH to yield (R)-2,3-dihydroxy-isovalerate. This chain is Ketol-acid reductoisomerase (NADP(+)), found in Cytophaga hutchinsonii (strain ATCC 33406 / DSM 1761 / CIP 103989 / NBRC 15051 / NCIMB 9469 / D465).